A 326-amino-acid polypeptide reads, in one-letter code: MNAIISPDYYYVLTVAGQSNAMAYGEGLPLPDREDAPHPRIKQLARFAHTHPGGPPCHFNDIIPLTHCPHDVQDMQGYHHPLATNHQTQYGTVGQALHIARKLLPFIPDNAGILIVPCCRGGSAFTAGSEGTYSERHGASHDACRWGTDTPLYQDLVSRTRAALAKNPQNKFLGACWMQGEFDLMTSDYASHPQHFNHMVEAFRRDLKQYHSQLNNITDAPWFCGDTTWYWKENFPHSYEAIYGNYQNNVLANIIFVDFQQQGERGLTNAPDEDPDDLSTGYYGSAYRSPENWTTALRSSHFSTAARRGIISDRFVEAILQFWRER.

A signal peptide spans 1–21; that stretch reads MNAIISPDYYYVLTVAGQSNA.

It localises to the periplasm. Functionally, probably catalyzes the hydrolysis of the 9-O-acetyl group of 9-O-acetyl-N-acetylneuraminate (Neu5,9Ac2). Is required for growth of E.coli on Neu5,9Ac2, an alternative sialic acid commonly found in mammalian host mucosal sites, in particular in the human intestine. The polypeptide is Probable 9-O-acetyl-N-acetylneuraminic acid deacetylase (nanS) (Escherichia coli (strain K12)).